A 288-amino-acid polypeptide reads, in one-letter code: Protease HtpX homolog (288 aa).

2 helical membrane passes run threonine 6 to glycine 26 and glutamine 28 to serine 48. Residue histidine 130 participates in Zn(2+) binding. Residue glutamate 131 is part of the active site. Histidine 134 is a Zn(2+) binding site. The next 2 membrane-spanning stretches (helical) occupy residues isoleucine 140–alanine 160 and valine 179–isoleucine 199. Glutamate 204 lines the Zn(2+) pocket.

Belongs to the peptidase M48B family. Zn(2+) serves as cofactor.

It localises to the cell inner membrane. The polypeptide is Protease HtpX homolog (Campylobacter concisus (strain 13826)).